A 160-amino-acid polypeptide reads, in one-letter code: CXXC motif containing zinc binding protein (160 aa).

Zn(2+) is bound by residues C33, C36, C67, and C70. At S75 the chain carries Phosphoserine.

This sequence belongs to the UPF0587 family. In terms of assembly, monomer.

The protein is CXXC motif containing zinc binding protein of Rattus norvegicus (Rat).